Reading from the N-terminus, the 423-residue chain is Glucose-1-phosphate adenylyltransferase (423 aa).

Alpha-D-glucose 1-phosphate-binding positions include Tyr100, Gly165, 180 to 181 (EK), and Ser191.

Belongs to the bacterial/plant glucose-1-phosphate adenylyltransferase family. Homotetramer.

It carries out the reaction alpha-D-glucose 1-phosphate + ATP + H(+) = ADP-alpha-D-glucose + diphosphate. It participates in glycan biosynthesis; glycogen biosynthesis. Involved in the biosynthesis of ADP-glucose, a building block required for the elongation reactions to produce glycogen. Catalyzes the reaction between ATP and alpha-D-glucose 1-phosphate (G1P) to produce pyrophosphate and ADP-Glc. This is Glucose-1-phosphate adenylyltransferase from Lachnospira eligens (strain ATCC 27750 / DSM 3376 / VPI C15-48 / C15-B4) (Eubacterium eligens).